We begin with the raw amino-acid sequence, 340 residues long: Glyceraldehyde-3-phosphate dehydrogenase (340 aa).

Residues 11–12 (SI) and G111 contribute to the NAD(+) site. 140–142 (SCN) lines the D-glyceraldehyde 3-phosphate pocket. C141 acts as the Nucleophile in catalysis. R169 provides a ligand contact to NAD(+). Position 195–196 (195–196 (HG)) interacts with D-glyceraldehyde 3-phosphate. NAD(+) is bound at residue Q303.

Belongs to the glyceraldehyde-3-phosphate dehydrogenase family. In terms of assembly, homotetramer.

The protein resides in the cytoplasm. The enzyme catalyses D-glyceraldehyde 3-phosphate + phosphate + NADP(+) = (2R)-3-phospho-glyceroyl phosphate + NADPH + H(+). It carries out the reaction D-glyceraldehyde 3-phosphate + phosphate + NAD(+) = (2R)-3-phospho-glyceroyl phosphate + NADH + H(+). The protein operates within carbohydrate degradation; glycolysis; pyruvate from D-glyceraldehyde 3-phosphate: step 1/5. The protein is Glyceraldehyde-3-phosphate dehydrogenase of Methanococcus maripaludis (strain C7 / ATCC BAA-1331).